Here is a 334-residue protein sequence, read N- to C-terminus: Thioredoxin reductase aclT (334 aa).

FAD is bound by residues 16 to 19 (GGPA), 38 to 43 (NASIDR), I93, A122, D294, and 302 to 303 (TL).

It belongs to the class-II pyridine nucleotide-disulfide oxidoreductase family. As to quaternary structure, homodimer. The cofactor is FAD.

It participates in mycotoxin biosynthesis. In terms of biological role, thioredoxin reductase; part of the gene cluster that mediates the biosynthesis of aspirochlorine (or antibiotic A30641), an unusual halogenated spiro compound with distinctive antifungal properties due to selective inhibition of protein biosynthesis, and which is also active against bacteria, viruses, and murine tumor cells. The non-ribosomal peptide synthetase (NRPS) aclP is responsible the formation of the diketopiperazine (DKP) core from the condensation of 2 phenylalanine residues. One Phe residue is tailored into chlorotyrosine by hydroxylation and chlorination, whereas the second Phe undergoes an unprecedented C-C bond cleavage to be converted into glycine. After formation of the DKP, sulfur is incorporated into the DKP by conjugation with glutathione by aclG, followed by its stepwise degradation to the thiol by aclI, aclJ and aclK, and the dithiol oxidation by aclT. In addition, oxygenases (aclB, aclC, aclL and aclO) and O-methyltransferases (aclM and aclU) act as tailoring enzymes to produce the intermediate dechloroaspirochlorine. Ultimately, chlorination of dechloroaspirochlorine by the halogenase aclH is the last step in the aspirochlorine pathway. The protein is Thioredoxin reductase aclT of Aspergillus oryzae (strain ATCC 42149 / RIB 40) (Yellow koji mold).